Reading from the N-terminus, the 269-residue chain is Ribosomal RNA large subunit methyltransferase E (269 aa).

The S-adenosyl-L-methionine site is built by Gly-58, Trp-60, Asp-78, Asp-96, and Asp-120. The active-site Proton acceptor is the Lys-160. The interval 234 to 269 is disordered; it reads HEKKEGNETSDNDEDNNKNGLMIKKIKELRGKRSKL. Residues 258-269 are compositionally biased toward basic and acidic residues; the sequence is KIKELRGKRSKL.

Belongs to the class I-like SAM-binding methyltransferase superfamily. RNA methyltransferase RlmE family.

Its subcellular location is the cytoplasm. The enzyme catalyses uridine(2552) in 23S rRNA + S-adenosyl-L-methionine = 2'-O-methyluridine(2552) in 23S rRNA + S-adenosyl-L-homocysteine + H(+). Its function is as follows. Specifically methylates the uridine in position 2552 of 23S rRNA at the 2'-O position of the ribose in the fully assembled 50S ribosomal subunit. The polypeptide is Ribosomal RNA large subunit methyltransferase E (Methanococcus aeolicus (strain ATCC BAA-1280 / DSM 17508 / OCM 812 / Nankai-3)).